The chain runs to 466 residues: Ribulose bisphosphate carboxylase large chain (466 aa).

K5 bears the N6,N6,N6-trimethyllysine mark. The substrate site is built by N114 and T164. K166 (proton acceptor) is an active-site residue. Substrate is bound at residue K168. The Mg(2+) site is built by K192, D194, and E195. An N6-carboxylysine modification is found at K192. The active-site Proton acceptor is the H285. Residues R286, H318, and S370 each contribute to the substrate site.

The protein belongs to the RuBisCO large chain family. Type I subfamily. Heterohexadecamer of 8 large chains and 8 small chains; disulfide-linked. The disulfide link is formed within the large subunit homodimers. It depends on Mg(2+) as a cofactor. Post-translationally, the disulfide bond which can form in the large chain dimeric partners within the hexadecamer appears to be associated with oxidative stress and protein turnover.

The protein localises to the plastid. It is found in the chloroplast. The enzyme catalyses 2 (2R)-3-phosphoglycerate + 2 H(+) = D-ribulose 1,5-bisphosphate + CO2 + H2O. It catalyses the reaction D-ribulose 1,5-bisphosphate + O2 = 2-phosphoglycolate + (2R)-3-phosphoglycerate + 2 H(+). Its function is as follows. RuBisCO catalyzes two reactions: the carboxylation of D-ribulose 1,5-bisphosphate, the primary event in carbon dioxide fixation, as well as the oxidative fragmentation of the pentose substrate in the photorespiration process. Both reactions occur simultaneously and in competition at the same active site. The sequence is that of Ribulose bisphosphate carboxylase large chain from Drosera peltata (Pale sundew).